The primary structure comprises 342 residues: N-acetyl-gamma-glutamyl-phosphate reductase (342 aa).

Cys-149 is a catalytic residue.

Belongs to the NAGSA dehydrogenase family. Type 1 subfamily.

The protein resides in the cytoplasm. It carries out the reaction N-acetyl-L-glutamate 5-semialdehyde + phosphate + NADP(+) = N-acetyl-L-glutamyl 5-phosphate + NADPH + H(+). The protein operates within amino-acid biosynthesis; L-arginine biosynthesis; N(2)-acetyl-L-ornithine from L-glutamate: step 3/4. Its function is as follows. Catalyzes the NADPH-dependent reduction of N-acetyl-5-glutamyl phosphate to yield N-acetyl-L-glutamate 5-semialdehyde. This Nitrosospira multiformis (strain ATCC 25196 / NCIMB 11849 / C 71) protein is N-acetyl-gamma-glutamyl-phosphate reductase.